A 354-amino-acid polypeptide reads, in one-letter code: Alkanal monooxygenase alpha chain (354 aa).

Belongs to the bacterial luciferase oxidoreductase family. In terms of assembly, heterodimer of an alpha and a beta chain.

The enzyme catalyses a long-chain fatty aldehyde + FMNH2 + O2 = a long-chain fatty acid + hnu + FMN + H2O + 2 H(+). Its function is as follows. Light-emitting reaction in luminous bacteria. The chain is Alkanal monooxygenase alpha chain (luxA) from Aliivibrio fischeri (Vibrio fischeri).